The chain runs to 255 residues: Acetyl-coenzyme A carboxylase carboxyl transferase subunit alpha (255 aa).

The 235-residue stretch at 1–235 folds into the CoA carboxyltransferase C-terminal domain; that stretch reads MNIAKIVREA…KKELQTELAR (235 aa).

Belongs to the AccA family. In terms of assembly, acetyl-CoA carboxylase is a heterohexamer composed of biotin carboxyl carrier protein (AccB), biotin carboxylase (AccC) and two subunits each of ACCase subunit alpha (AccA) and ACCase subunit beta (AccD).

The protein localises to the cytoplasm. The catalysed reaction is N(6)-carboxybiotinyl-L-lysyl-[protein] + acetyl-CoA = N(6)-biotinyl-L-lysyl-[protein] + malonyl-CoA. It participates in lipid metabolism; malonyl-CoA biosynthesis; malonyl-CoA from acetyl-CoA: step 1/1. Its function is as follows. Component of the acetyl coenzyme A carboxylase (ACC) complex. First, biotin carboxylase catalyzes the carboxylation of biotin on its carrier protein (BCCP) and then the CO(2) group is transferred by the carboxyltransferase to acetyl-CoA to form malonyl-CoA. The chain is Acetyl-coenzyme A carboxylase carboxyl transferase subunit alpha from Streptococcus pneumoniae (strain CGSP14).